Consider the following 227-residue polypeptide: Cytochrome c oxidase subunit 2 (227 aa).

The Mitochondrial intermembrane segment spans residues 1-14 (MAYPLQLGFQDATS). A helical membrane pass occupies residues 15 to 45 (PVMEELLHFHDHTLMIIFLISSLVLYIIMLM). Residues 46 to 59 (LTTKLIHTNMMNVQ) lie on the Mitochondrial matrix side of the membrane. Residues 60 to 87 (EMEMIWTILPAIILILIALPSLHTLYMM) traverse the membrane as a helical segment. Topologically, residues 88 to 227 (DEINNPLLTI…YFESWSASLA (140 aa)) are mitochondrial intermembrane. Residues His-161, Cys-196, Glu-198, Cys-200, His-204, and Met-207 each coordinate Cu cation. Glu-198 is a Mg(2+) binding site. Tyr-218 carries the post-translational modification Phosphotyrosine.

This sequence belongs to the cytochrome c oxidase subunit 2 family. As to quaternary structure, component of the cytochrome c oxidase (complex IV, CIV), a multisubunit enzyme composed of 14 subunits. The complex is composed of a catalytic core of 3 subunits MT-CO1, MT-CO2 and MT-CO3, encoded in the mitochondrial DNA, and 11 supernumerary subunits COX4I, COX5A, COX5B, COX6A, COX6B, COX6C, COX7A, COX7B, COX7C, COX8 and NDUFA4, which are encoded in the nuclear genome. The complex exists as a monomer or a dimer and forms supercomplexes (SCs) in the inner mitochondrial membrane with NADH-ubiquinone oxidoreductase (complex I, CI) and ubiquinol-cytochrome c oxidoreductase (cytochrome b-c1 complex, complex III, CIII), resulting in different assemblies (supercomplex SCI(1)III(2)IV(1) and megacomplex MCI(2)III(2)IV(2)). Found in a complex with TMEM177, COA6, COX18, COX20, SCO1 and SCO2. Interacts with TMEM177 in a COX20-dependent manner. Interacts with COX20. Interacts with COX16. Cu cation serves as cofactor.

Its subcellular location is the mitochondrion inner membrane. The catalysed reaction is 4 Fe(II)-[cytochrome c] + O2 + 8 H(+)(in) = 4 Fe(III)-[cytochrome c] + 2 H2O + 4 H(+)(out). Its function is as follows. Component of the cytochrome c oxidase, the last enzyme in the mitochondrial electron transport chain which drives oxidative phosphorylation. The respiratory chain contains 3 multisubunit complexes succinate dehydrogenase (complex II, CII), ubiquinol-cytochrome c oxidoreductase (cytochrome b-c1 complex, complex III, CIII) and cytochrome c oxidase (complex IV, CIV), that cooperate to transfer electrons derived from NADH and succinate to molecular oxygen, creating an electrochemical gradient over the inner membrane that drives transmembrane transport and the ATP synthase. Cytochrome c oxidase is the component of the respiratory chain that catalyzes the reduction of oxygen to water. Electrons originating from reduced cytochrome c in the intermembrane space (IMS) are transferred via the dinuclear copper A center (CU(A)) of subunit 2 and heme A of subunit 1 to the active site in subunit 1, a binuclear center (BNC) formed by heme A3 and copper B (CU(B)). The BNC reduces molecular oxygen to 2 water molecules using 4 electrons from cytochrome c in the IMS and 4 protons from the mitochondrial matrix. The chain is Cytochrome c oxidase subunit 2 (MT-CO2) from Elephas maximus (Indian elephant).